The following is a 190-amino-acid chain: Peptidyl-prolyl cis-trans isomerase A (190 aa).

The N-terminal stretch at 1–23 is a signal peptide; sequence MSKRILAAVVTVLSLTAFSPAFA. Residues 26–187 form the PPIase cyclophilin-type domain; the sequence is TSTHVLLTTS…KPIVIQSAKI (162 aa).

The protein belongs to the cyclophilin-type PPIase family.

The protein localises to the periplasm. The enzyme catalyses [protein]-peptidylproline (omega=180) = [protein]-peptidylproline (omega=0). Functionally, PPIases accelerate the folding of proteins. It catalyzes the cis-trans isomerization of proline imidic peptide bonds in oligopeptides. This is Peptidyl-prolyl cis-trans isomerase A (rotA) from Dickeya dadantii (strain 3937) (Erwinia chrysanthemi (strain 3937)).